The primary structure comprises 687 residues: Dictomallein (687 aa).

Disordered regions lie at residues 1–45 (MGNG…SRRL) and 73–112 (TAGGAAPLTPAVASPAGPTGSTPGSTPGATTAPAPSSTSA). In terms of domain architecture, Peptidase M66 spans 233-501 (PVFGTDADVQ…QAWIASRVLA (269 aa)). Histidine 393 lines the Zn(2+) pocket. Glutamate 394 is an active-site residue. Residues histidine 397 and histidine 403 each contribute to the Zn(2+) site.

The protein belongs to the dictomallein family. Zn(2+) is required as a cofactor.

The chain is Dictomallein (dtmL) from Burkholderia pseudomallei (strain 668).